Here is a 419-residue protein sequence, read N- to C-terminus: Hydrolase LUC6 (419 aa).

Serine 238 is a catalytic residue.

The protein belongs to the AB hydrolase superfamily. FUS2 hydrolase family.

Its pathway is mycotoxin biosynthesis. In terms of biological role, hydrolase; part of the gene cluster that mediates the biosynthesis of the mycotoxin lucilactaene and the lucilactaene-related compound NG-391 that act as cell cycle inhibitors with potent growth inhibitory activity against malarial parasites, moderate growth inhibitory activity against cancer cells, and no activity against bacteria and fungi. Within the pathway, LUC6 may catalyze the 2-pyrrolidone ring formation to form prelucilactaene C from prelucilactaene B, followed by C-15 hydroxylation by the same enzyme to give prelucilactaene D, epoxydation to yield prelucilactaene E, and finally cyclization to yield prelucilactaene F. The pathway begins with the hybrid PKS-NRPS synthetase LUC5 which is responsible for the condensation of one acetyl-coenzyme A (CoA) unit with six malonyl-CoA units and the amide linkage of the arising heptaketide and homoserine, subsequently releasing the first intermediate prelucilactaene B. Both the cytochrome P450 monooxygenase LUC2 and the hydrolase LUC6 function in parallel in modification of prelucilactaene B. LUC6 may catalyze the 2-pyrrolidone ring formation to form prelucilactaene C from prelucilactaene B, followed by C-15 hydroxylation by the same enzyme to give prelucilactaene D, which is then converted to prelucilactaene E by epoxidation, and finally to prelucilactaene F by cyclization. Prelucilactane D, prelucilactaene E, and prelucilactaene F can be converted to dihydrolucilactaene, NG391, and lucilactaene, respectively, via C-20 methyl group hydroxylation by the cytochrome P450 monooxygenase LUC2. However, LUC2, unlike FUS8 in fusarin C biosynthesis, is not enough for the full oxidation of the C-20 methyl group into carboxylic acid, which is a prerequisite for the final methylation step. The aldehyde dehydrogenase LUC3 is involved in the biosynthesis by further oxidation of the C-20 alcoholic analog prelucilactaene G into a carboxylic derivative. This unidentified carboxylic derivative may be converted to demethyllucilactaene. As the last step, the methyltransferase LUC1 methylates the hydroxyl group at C-21 of demethyllucilactaene to generate lucilactaene. The sequence is that of Hydrolase LUC6 from Fusarium sp.